The chain runs to 401 residues: F-box protein At1g69090 (401 aa).

The interval 1–23 is disordered; the sequence is MASPTLALAQSPPPKSPAVSVSQ. The region spanning 27–74 is the F-box domain; it reads HCWSKLPLDLMQLVFERLAFLDFERAKSVCSSWQFGSKQSKPNNQIPW.

The polypeptide is F-box protein At1g69090 (Arabidopsis thaliana (Mouse-ear cress)).